Consider the following 186-residue polypeptide: MSEIIHVINPMSKWPLASQFGFNLDILETNLINLGVVIGTLLYFGNEVISNLLNKRKEIILNSIRDAEQRYEDATEKLKQANRDLEKAKFKANEIRIQGSTQIEIEKKELIYAADRDSKHLEESKNIAIHLEEQRILEEVRREVSGLAFQKTLIILNNRLTSQLQVEMIDYKIDLFFNNFQVSTNL.

Residues Ile26–Phe44 traverse the membrane as a helical segment.

The protein belongs to the ATPase B chain family. F-type ATPases have 2 components, F(1) - the catalytic core - and F(0) - the membrane proton channel. F(1) has five subunits: alpha(3), beta(3), gamma(1), delta(1), epsilon(1). F(0) has four main subunits: a(1), b(1), b'(1) and c(10-14). The alpha and beta chains form an alternating ring which encloses part of the gamma chain. F(1) is attached to F(0) by a central stalk formed by the gamma and epsilon chains, while a peripheral stalk is formed by the delta, b and b' chains.

The protein localises to the plastid. It is found in the chloroplast thylakoid membrane. F(1)F(0) ATP synthase produces ATP from ADP in the presence of a proton or sodium gradient. F-type ATPases consist of two structural domains, F(1) containing the extramembraneous catalytic core and F(0) containing the membrane proton channel, linked together by a central stalk and a peripheral stalk. During catalysis, ATP synthesis in the catalytic domain of F(1) is coupled via a rotary mechanism of the central stalk subunits to proton translocation. In terms of biological role, component of the F(0) channel, it forms part of the peripheral stalk, linking F(1) to F(0). The sequence is that of ATP synthase subunit b, chloroplastic from Chara vulgaris (Common stonewort).